Reading from the N-terminus, the 1357-residue chain is DNA-directed RNA polymerase subunit beta (1357 aa).

It belongs to the RNA polymerase beta chain family. The RNAP catalytic core consists of 2 alpha, 1 beta, 1 beta' and 1 omega subunit. When a sigma factor is associated with the core the holoenzyme is formed, which can initiate transcription.

It carries out the reaction RNA(n) + a ribonucleoside 5'-triphosphate = RNA(n+1) + diphosphate. Its function is as follows. DNA-dependent RNA polymerase catalyzes the transcription of DNA into RNA using the four ribonucleoside triphosphates as substrates. This chain is DNA-directed RNA polymerase subunit beta, found in Pseudomonas putida (strain W619).